Consider the following 1270-residue polypeptide: DNA-directed RNA polymerase subunit beta (1270 aa).

This sequence belongs to the RNA polymerase beta chain family. In terms of assembly, the RNAP catalytic core consists of 2 alpha, 1 beta, 1 beta' and 1 omega subunit. When a sigma factor is associated with the core the holoenzyme is formed, which can initiate transcription.

It catalyses the reaction RNA(n) + a ribonucleoside 5'-triphosphate = RNA(n+1) + diphosphate. Its function is as follows. DNA-dependent RNA polymerase catalyzes the transcription of DNA into RNA using the four ribonucleoside triphosphates as substrates. This Porphyromonas cangingivalis protein is DNA-directed RNA polymerase subunit beta.